Here is a 368-residue protein sequence, read N- to C-terminus: MSVAGLKKQFYKASQLVSEKVGGAEGTKLDDDFKDMEKKVDVTSKAVAEVLVRTIEYLQPNPASRAKLTMLNTVSKIRGQVKNPGYPQSEGLLGECMVRHGKELGGESNFGDALLDAGESMKRLAEVKDSLDIEVKQNFIDPLQNLCDKDLKEIQHHLKKLEGRRLDFDYKKKRQGKIPDEELRQALEKFEESKEVAETSMHNLLETDIEQVSQLSALVDAQLDYHRQAVQILEELADKLKRRVREASSRPKREFKPRPREPFELGELEQPNGGFPCAPAPKITASSSFRSSDKPIRMPSKSMPPLDQPSCKALYDFEPENDGELGFREGDLITLTNQIDENWYEGMLHGQSGFFPLSYVQVLVPLPQ.

The segment at 1 to 21 (MSVAGLKKQFYKASQLVSEKV) is membrane-binding amphipathic helix. In terms of domain architecture, BAR spans 18-249 (SEKVGGAEGT…LKRRVREASS (232 aa)). Positions 60-87 (PNPASRAKLTMLNTVSKIRGQVKNPGYP) are required for dimerization upon membrane association. Positions 180–250 (DEELRQALEK…KRRVREASSR (71 aa)) form a coiled coil. The segment at 218–254 (LVDAQLDYHRQAVQILEELADKLKRRVREASSRPKRE) is interaction with ARC. The interval 244–307 (VREASSRPKR…MPSKSMPPLD (64 aa)) is disordered. A compositionally biased stretch (basic and acidic residues) spans 245–263 (REASSRPKREFKPRPREPF). Residues Ser288 and Ser292 each carry the phosphoserine modification. Residues 306–365 (LDQPSCKALYDFEPENDGELGFREGDLITLTNQIDENWYEGMLHGQSGFFPLSYVQVLVP) enclose the SH3 domain. Tyr315 carries the phosphotyrosine modification.

Belongs to the endophilin family. Interacts with ARC, SYNJ1 and DNM1. Interacts with PDCD6IP. Interacts with BIN2.

The protein localises to the cytoplasm. It is found in the early endosome membrane. Its subcellular location is the cell projection. It localises to the podosome. Implicated in endocytosis. May recruit other proteins to membranes with high curvature. The chain is Endophilin-A2 (Sh3gl1) from Mus musculus (Mouse).